The primary structure comprises 406 residues: Zinc finger protein 793 (406 aa).

The KRAB domain occupies 8 to 79 (VSFKDVVVGF…EAACPGCHCW (72 aa)). 6 consecutive C2H2-type zinc fingers follow at residues 227-249 (HVCSECGKAFCYKSEFIRHQRSH), 255-277 (YGCTDCGKAFSHKSTLIKHQRIH), 283-305 (FECFFCGKAFTQKSHRTEHQRTH), 311-333 (FVCSECGKSFGEKSYLNVHRKMH), 339-361 (YRCRECGKSFSQKSCLNKHWRTH), and 367-389 (YGCNECGKAFYQKPNLSRHQKIH).

This sequence belongs to the krueppel C2H2-type zinc-finger protein family.

It localises to the nucleus. In terms of biological role, may be involved in transcriptional regulation. The polypeptide is Zinc finger protein 793 (ZNF793) (Homo sapiens (Human)).